The primary structure comprises 308 residues: MAVQAPCIQLNDGNTIPIVALGTGRGTAKESDSIDEVRQAVYWAIEAGYRHIDTAAVYQDEEQVGQGIAEAIANGLVTREELFVTTKLWNDKHARDQVVPALQESLKKLGLDYIDLYLIHFPIATKPDDSPDNIDYLETWQGMQDARQLGLARSIGVSNFNATQITRLVSNSYIRPVINQIEVNPTNTQEPLVAHCQSLGIAVMAYSPFGFVVSRGQTGAPPPRSDDPTLTALANKYRKSVGQILLRYLIDRGLIPIPKSTNKQRIAQNIDLFDFQLTFEEVAAINQFNKNHRVIDISDWKDYPNYPN.

NADP(+)-binding positions include 22-29 (GTGRGTAK) and Asp-53. The active-site Proton donor is the Tyr-58. Residues 158–159 (SN), Arg-215, and 259–269 (KSTNKQRIAQN) each bind NADP(+).

It belongs to the short-chain dehydrogenases/reductases (SDR) family. As to expression, detected in hemolymph (at protein level). Detected in larval ovary.

With respect to regulation, subject to substrate inhibition by high levels of 3-dehydroecdysone. Its function is as follows. NADP-dependent oxidoreductase with high 3-dehydroecdysone reductase activity. May play a role in the regulation of molting. Has lower activity with phenylglyoxal and isatin (in vitro). Has no activity with NADH as cosubstrate. Has no activity with nitrobenzaldehyde and 3-hydroxybenzaldehyde. This Bombyx mori (Silk moth) protein is Aldo-keto reductase AKR2E4 (akr2e).